The primary structure comprises 420 residues: O-methyltransferase penK (420 aa).

Asp285 is a binding site for S-adenosyl-L-methionine. The Proton acceptor role is filled by His325.

The protein belongs to the class I-like SAM-binding methyltransferase superfamily. Cation-independent O-methyltransferase family.

It functions in the pathway secondary metabolite biosynthesis. The protein operates within alkaloid biosynthesis. Its pathway is mycotoxin biosynthesis. Functionally, O-methyltransferase; part of the gene cluster that mediates the biosynthesis of penigequinolones, potent insecticidal alkaloids that contain a highly modified 10-carbon prenyl group. The first stage is catalyzed by the nonribosomal peptide synthetase penN that condenses anthranilic acid and O-methyl-L-tyrosine to produce 4'-methoxycyclopeptin. 4'-methoxycyclopeptin is then converted to 4'-methoxydehydrocyclopeptin by the ketoglutarate-dependent dioxygenase penM through dehydrogenation to form a double bond between C-alpha and C-beta of the O-methyltyrosine side chain. PenM also converts its first product methoxydehydrocyclopeptin to 4'-methoxycyclopenin. The following conversion of 4'methoxycyclopenin into 4'-methoxyviridicatin is catalyzed by the cyclopenase penL. 4'-methoxyviridicatin is the precursor of quinolone natural products, and is further converted to quinolinone B. The prenyltransferase penI then catalyzes the canonical Friedel-Crafts alkylation of quinolinone B with dimethylallyl cation to yield dimethylallyl quinolone, which is subjected to FAD-dependent dehydrogenation by the FAD-linked oxidoreductase penH to yield conjugated aryl diene. The delta(3') double bond then serves as the site of the second alkylation with DMAPP catalyzed by the prenyltransferase penG to yield a carbenium ion intermediate, which can be attacked by H(2)O to yield a styrenyl quinolone containing a C3'-hydroxyprenyl chain, or undergo cyclization to yield yaequinolones J1 and J2. The conversion of the styrenyl quinolone into the tetrahydrofuran-containing yaequinolone C is performed by the FAD-dependent monooxygenase penE and involves epoxidation of the terminal C7'-C8' olefin, followed by epoxide ring opening initiated by the C3' hydroxyl group. The predicted cysteine hydrolase penJ acts as an epoxide hydrolase that enhances the rate of the 5-exo-tet cyclization step, increasing the yield of yaequinolone C. PenF catalyzes the cationic rearrangement of the epoxide formed by penE (before ring opening to produce yaequinolone C) into yaequinolone D. Finally, the short-chain dehydrogenase/reductase (SDR)-like reductase penD, catalyzes both the dehydration of yaequinolone D and the reduction of the resulting oxonium to yield penigequinolone. The polypeptide is O-methyltransferase penK (Penicillium thymicola).